The following is a 461-amino-acid chain: MAVSGTAAGTGLASTPRLFGTDGVRGIANRDLTAELALDLAVAAAHVLAQAGAFEGHRPLAVVGRDPRASGEFLEAAVVAGLASAGVDVLRLGVLPTPAVAYLTAALDADLGVVLSASHNPMPDNGIKFLARGGHKLPDDIEDAVAARLGEPWTRPVGRFVGRVRDYPEGLDQYVEHVLATSDQRLDGLRVVVDCAHGAASVVSPAVLRRAGATVVPIGCEPDGYNINDGHGSTNIETLQAAVRREGADAGIAHDGDADRCLAVDAAGDVVDGDQILAILALAWQEAGRLAHDTVVATVMSNLGLKLGLAAHGISVVETAVGDRYVLEAMRAGGYVLGGEQSGHIIMLDYATTGDGVLTGLQLLGRMAATGRPLADLARVVRRLPQVLRNVTGVDKTRVDTDPVINKELAAARGELGDGGRVLLRASGTEPVVRVMVEAETEADAERVAERLARVVRERLG.

The active-site Phosphoserine intermediate is the Ser-118. Ser-118, Asp-255, Asp-257, and Asp-259 together coordinate Mg(2+). A Phosphoserine modification is found at Ser-118.

The protein belongs to the phosphohexose mutase family. Mg(2+) serves as cofactor. Post-translationally, activated by phosphorylation.

It carries out the reaction alpha-D-glucosamine 1-phosphate = D-glucosamine 6-phosphate. In terms of biological role, catalyzes the conversion of glucosamine-6-phosphate to glucosamine-1-phosphate. In Acidothermus cellulolyticus (strain ATCC 43068 / DSM 8971 / 11B), this protein is Phosphoglucosamine mutase.